The primary structure comprises 214 residues: RNA pyrophosphohydrolase (214 aa).

The region spanning 6–149 (GFRPNVGIIL…KRDVYQLALT (144 aa)) is the Nudix hydrolase domain. A Nudix box motif is present at residues 38 to 59 (GGIKYGETPMQAMYRELHEETG).

Belongs to the Nudix hydrolase family. RppH subfamily. The cofactor is a divalent metal cation.

In terms of biological role, accelerates the degradation of transcripts by removing pyrophosphate from the 5'-end of triphosphorylated RNA, leading to a more labile monophosphorylated state that can stimulate subsequent ribonuclease cleavage. The sequence is that of RNA pyrophosphohydrolase from Burkholderia cenocepacia (strain HI2424).